The sequence spans 457 residues: MSFVPGQENAGSRSSSGNRAGNGILKKTTWADQTERGSNNQNRGRRNQPKQTATTQPNSGSVVPHYSWFSGITQFQKGKEFKFAEGQGVPIANGIPATEQKGYWFRHNRRSFKSPDGQQKQLLPRWYFYYLGTGPYAGAEYGDDVEGVCWVANKQADTRTSADIAERDPSSHEAIPTRFAPGTFLPQGYYVEGSGRSAPASRSGSRSQSRGPNNRARSSSNQRQPASIVKPDMAEEIAALVLAKLGKDAGQPKQVTKQSAKEVRQKILNKPRQKRTPNKQCPVQQCFGKRGPNQNFGGPEMLKLGTSDPQFPILAELAPTAGAFFFGSKLELVKKNSVGVDEPTKDVYELQYSGAVRFDSTLPGFETIMKVLRENLNAYQNQDGGADVVSPKPQRKRGQRQVAQKKNDEVDNVSVAKPKSAVQRNVNRELTPEDRSLLAQILDDGVVPDGLEDDSNV.

The tract at residues 1–62 (MSFVPGQENA…ATTQPNSGSV (62 aa)) is disordered. Low complexity predominate over residues 9 to 23 (NAGSRSSSGNRAGNG). Polar residues predominate over residues 49 to 61 (PKQTATTQPNSGS). The tract at residues 56–197 (QPNSGSVVPH…GYYVEGSGRS (142 aa)) is RNA-binding. Residues 64–193 (PHYSWFSGIT…FLPQGYYVEG (130 aa)) enclose the CoV N NTD domain. 3 residues coordinate RNA: Arg109, Arg125, and Arg167. Disordered regions lie at residues 158 to 178 (TRTS…IPTR), 190 to 228 (YVEG…PASI), 249 to 290 (AGQP…FGKR), and 382 to 429 (QDGG…VNRE). Position 170 is a phosphoserine; by host (Ser170). Thr177 is modified (phosphothreonine; by host). Low complexity predominate over residues 193–212 (GSGRSAPASRSGSRSQSRGP). The residue at position 194 (Ser194) is a Phosphoserine; by host. Residues 215–225 (RARSSSNQRQP) show a composition bias toward polar residues. A CoV N CTD domain is found at 260–383 (AKEVRQKILN…ENLNAYQNQD (124 aa)). A compositionally biased stretch (basic residues) spans 267–277 (ILNKPRQKRTP). A dimerization region spans residues 267–384 (ILNKPRQKRT…NLNAYQNQDG (118 aa)). At Ser390 the chain carries Phosphoserine; by host. Thr431 carries the phosphothreonine; by host modification.

It belongs to the betacoronavirus nucleocapsid protein family. Homooligomer. Both monomeric and oligomeric forms interact with RNA. Interacts with protein M. Interacts with NSP3; this interaction serves to tether the genome to the newly translated replicase-transcriptase complex at a very early stage of infection. Post-translationally, ADP-ribosylated. The ADP-ribosylation is retained in the virion during infection. In terms of processing, phosphorylated on serine and threonine residues.

The protein resides in the virion. Its subcellular location is the host endoplasmic reticulum-Golgi intermediate compartment. It is found in the host Golgi apparatus. In terms of biological role, packages the positive strand viral genome RNA into a helical ribonucleocapsid (RNP) and plays a fundamental role during virion assembly through its interactions with the viral genome and membrane protein M. Plays an important role in enhancing the efficiency of subgenomic viral RNA transcription as well as viral replication. The chain is Nucleoprotein from Puffinus puffinus (Manx shearwater).